Here is a 206-residue protein sequence, read N- to C-terminus: Probable thymidylate kinase (206 aa).

7 to 14 is an ATP binding site; the sequence is GIDGSGKS.

The protein belongs to the thymidylate kinase family.

The catalysed reaction is dTMP + ATP = dTDP + ADP. The polypeptide is Probable thymidylate kinase (Methanospirillum hungatei JF-1 (strain ATCC 27890 / DSM 864 / NBRC 100397 / JF-1)).